A 159-amino-acid chain; its full sequence is Large ribosomal subunit protein uL11 (159 aa).

The disordered stretch occupies residues 1–26 (MAGTIEVLVPGGKANPGPPLGPELGP).

This sequence belongs to the universal ribosomal protein uL11 family. As to quaternary structure, part of the ribosomal stalk of the 50S ribosomal subunit. Interacts with L10 and the large rRNA to form the base of the stalk. L10 forms an elongated spine to which L12 dimers bind in a sequential fashion forming a multimeric L10(L12)X complex.

Its function is as follows. Forms part of the ribosomal stalk which helps the ribosome interact with GTP-bound translation factors. In Haloferax volcanii (strain ATCC 29605 / DSM 3757 / JCM 8879 / NBRC 14742 / NCIMB 2012 / VKM B-1768 / DS2) (Halobacterium volcanii), this protein is Large ribosomal subunit protein uL11.